We begin with the raw amino-acid sequence, 243 residues long: 4-phosphopantoate--beta-alanine ligase (243 aa).

Residues Arg-15, Arg-37, Asp-176–Asn-178, and Arg-182–Thr-183 each bind ATP.

The protein belongs to the archaeal phosphopantothenate synthetase family. Homodimer.

The enzyme catalyses (R)-4-phosphopantoate + beta-alanine + ATP = (R)-4'-phosphopantothenate + AMP + diphosphate + H(+). It participates in cofactor biosynthesis; coenzyme A biosynthesis. In terms of biological role, catalyzes the condensation of (R)-4-phosphopantoate and beta-alanine to 4'-phosphopantothenate in the CoA biosynthesis pathway. The protein is 4-phosphopantoate--beta-alanine ligase of Methanospirillum hungatei JF-1 (strain ATCC 27890 / DSM 864 / NBRC 100397 / JF-1).